A 263-amino-acid polypeptide reads, in one-letter code: Putative aliphatic sulfonates transport permease protein SsuC (263 aa).

The Cytoplasmic segment spans residues 1–13 (MATPVKKWLLRVA). A helical transmembrane segment spans residues 14 to 34 (PWFLPVGIVAVWQLASSVGWL). Over 35-43 (STRILPSPE) the chain is Periplasmic. The helical transmembrane segment at 44–64 (GVVTAFWTLSASGELWQHLAI) threads the bilayer. Residues 58–242 (LWQHLAISSW…LLGKLADVSA (185 aa)) form the ABC transmembrane type-1 domain. The Cytoplasmic portion of the chain corresponds to 65–68 (SSWR). Residues 69-89 (ALIGFSIGGSLGLILGLISGL) form a helical membrane-spanning segment. The Periplasmic portion of the chain corresponds to 90 to 102 (SRWGERLLDTSIQ). A helical transmembrane segment spans residues 103–122 (MLRNVPHLALIPLVILWFGI). Residues 123 to 125 (DES) lie on the Cytoplasmic side of the membrane. Residues 126–148 (AKIFLVALGTLFPIYINTWHGIR) traverse the membrane as a helical segment. Residues 149–164 (NIDRGLVEMARSYGLS) lie on the Periplasmic side of the membrane. The chain crosses the membrane as a helical span at residues 165 to 185 (GIPLFIHVILPGALPSIMVGV). Over 186 to 187 (RF) the chain is Cytoplasmic. A helical membrane pass occupies residues 188 to 208 (ALGLMWLTLIVAETISANSGI). The Periplasmic portion of the chain corresponds to 209-217 (GYLAMNARE). A helical membrane pass occupies residues 218–238 (FLQTDVVVVAIILYALLGKLA). The Cytoplasmic segment spans residues 239–263 (DVSAQLLERLWLRWNPAYHLKEATV).

It belongs to the binding-protein-dependent transport system permease family. CysTW subfamily.

It is found in the cell inner membrane. Its function is as follows. Part of a binding-protein-dependent transport system for aliphatic sulfonates. Probably responsible for the translocation of the substrate across the membrane. This is Putative aliphatic sulfonates transport permease protein SsuC (ssuC) from Escherichia coli (strain K12).